The sequence spans 1067 residues: MNSMDRHIQQTNDRLQCIKQHLQNPANFHNAATELLDWCGDPRAFQRPFEQSLMGCLTVVSRVAAQQGFDLDLGYRLLAVCAANRDKFTPKSAALLSSWCEELGRLLLLRHQKSRQSDPPGKLPMQPPLSSMSSMKPTLSHSDGSFPYDSVPWQQNTNQPPGSLSVVTTVWGVTNTSQSQVLGNPMANANNPMNPGGNPMASGMTTSNPGLNSPQFAGQQQQFSAKAGPAQPYIQQSMYGRPNYPGSGGFGASYPGGPNAPAGMGIPPHTRPPADFTQPAAAAAAAAVAAAAATATATATATVAALQETQNKDINQYGPMGPTQAYNSQFMNQPGPRGPASMGGSMNPASMAAGMTPSGMSGPPMGMNQPRPPGISPFGTHGQRMPQQTYPGPRPQSLPIQNIKRPYPGEPNYGNQQYGPNSQFPTQPGQYPAPNPPRPLTSPNYPGQRMPSQPSSGQYPPPTVNMGQYYKPEQFNGQNNTFSGSSYSNYSQGNVNRPPRPVPVANYPHSPVPGNPTPPMTPGSSIPPYLSPSQDVKPPFPPDIKPNMSALPPPPANHNDELRLTFPVRDGVVLEPFRLEHNLAVSNHVFHLRPTVHQTLMWRSDLELQFKCYHHEDRQMNTNWPASVQVSVNATPLTIERGDNKTSHKPLHLKHVCQPGRNTIQITVTACCCSHLFVLQLVHRPSVRSVLQGLLKKRLLPAEHCITKIKRNFSSVAASSGNTTLNGEDGVEQTAIKVSLKCPITFRRIQLPARGHDCKHVQCFDLESYLQLNCERGTWRCPVCNKTALLEGLEVDQYMWGILNAIQHSEFEEVTIDPTCSWRPVPIKSDLHIKDDPDGIPSKRFKTMSPSQMIMPNVMEMIAALGPGPSPYPLPPPPGGTNSNDYSSQGNNYQGHGNFDFPHGNPGGTSMNDFMHGPPQLSHPPDMPNNMAALEKPLSHPMQETMPHAGSSDQPHPSIQQGLHVPHPSSQSGPPLHHSGAPPPPPSQPPRQPPQAAPSSHPHSDLTFNPSSALEGQAGAQGASDMPEPSLDLLPELTNPDELLSYLDPPDLPSNSNDDLLSLFENN.

Positions 1–120 (MNSMDRHIQQ…HQKSRQSDPP (120 aa)) are sufficient for transactivation activity; sufficient for interaction with NOTCH1. A Glycyl lysine isopeptide (Lys-Gly) (interchain with G-Cter in SUMO2) cross-link involves residue lysine 91. Disordered regions lie at residues 112–141 (QKSRQSDPPGKLPMQPPLSSMSSMKPTLSH) and 327–542 (NSQF…PFPP). Low complexity predominate over residues 128–141 (PLSSMSSMKPTLSH). Polar residues predominate over residues 413-429 (YGNQQYGPNSQFPTQPG). Positions 431–440 (YPAPNPPRPL) are enriched in pro residues. Over residues 479–497 (NNTFSGSSYSNYSQGNVNR) the composition is skewed to low complexity. Residues 510-521 (SPVPGNPTPPMT) are compositionally biased toward pro residues. The segment at 727-808 (GEDGVEQTAI…MWGILNAIQH (82 aa)) adopts an SP-RING-type zinc-finger fold. Zn(2+) is bound by residues cysteine 758, histidine 760, cysteine 781, and cysteine 784. Residues lysine 834 and lysine 843 each participate in a glycyl lysine isopeptide (Lys-Gly) (interchain with G-Cter in SUMO2) cross-link. Residues 837-1067 (PDGIPSKRFK…DDLLSLFENN (231 aa)) are transactivation domain. Pro residues predominate over residues 868-879 (GPSPYPLPPPPG). The disordered stretch occupies residues 868–1067 (GPSPYPLPPP…DDLLSLFENN (200 aa)). 2 stretches are compositionally biased toward polar residues: residues 881 to 895 (TNSNDYSSQGNNYQG) and 951 to 961 (SSDQPHPSIQQ). The segment covering 981 to 996 (APPPPPSQPPRQPPQA) has biased composition (pro residues). Low complexity predominate over residues 1040–1067 (PDELLSYLDPPDLPSNSNDDLLSLFENN).

As to quaternary structure, interacts with AR, but not with ESR1, NR3C1, PGR, THRB nor VDR. Interacts with NOTCH1 and RBPJ. Interacts with SMARCA4. Interacts (via SP-RING-type domain) with SMAD3 and SMAD4 (via MH2 domain). In terms of tissue distribution, expressed most abundantly in ovary and, at lower levels, in prostate, spleen and testis. Weak expression, if any, in thymus, small intestine, colon and peripheral blood leukocytes.

It is found in the nucleus. The protein resides in the nucleoplasm. It localises to the cytoplasm. Functionally, acts as a transcriptional coactivator. Increases ligand-dependent transcriptional activity of AR and promotes AR sumoylation. The stimulation of AR activity is dependent upon sumoylation. Also functions as a transcriptional coactivator in the TGF-beta signaling pathway by increasing the activity of the SMAD3/SMAD4 transcriptional complex. Involved in transcriptional activation of a subset of NOTCH1 target genes including MYC. Involved in thymocyte and T cell development. Involved in the regulation of postmitotic positioning of pyramidal neurons in the developing cerebral cortex. The polypeptide is Zinc finger MIZ domain-containing protein 1 (Homo sapiens (Human)).